We begin with the raw amino-acid sequence, 85 residues long: Small ribosomal subunit protein bS20 (85 aa).

Disordered regions lie at residues 1-25 (MANIKSAIKRAKLSEERRAHNASIK) and 62-85 (ARKGLIHQNAASRQKSRLAKQVNA).

Belongs to the bacterial ribosomal protein bS20 family.

Its function is as follows. Binds directly to 16S ribosomal RNA. This is Small ribosomal subunit protein bS20 from Bacillus cereus (strain G9842).